Reading from the N-terminus, the 445-residue chain is Phosphoglucosamine mutase (445 aa).

S102 acts as the Phosphoserine intermediate in catalysis. Mg(2+) contacts are provided by S102, D241, D243, and D245. Position 102 is a phosphoserine (S102).

The protein belongs to the phosphohexose mutase family. Mg(2+) serves as cofactor. In terms of processing, activated by phosphorylation.

It catalyses the reaction alpha-D-glucosamine 1-phosphate = D-glucosamine 6-phosphate. In terms of biological role, catalyzes the conversion of glucosamine-6-phosphate to glucosamine-1-phosphate. The polypeptide is Phosphoglucosamine mutase (Shewanella baltica (strain OS155 / ATCC BAA-1091)).